The following is a 513-amino-acid chain: ATP synthase subunit alpha (513 aa).

169-176 (GDRQTGKT) provides a ligand contact to ATP.

This sequence belongs to the ATPase alpha/beta chains family. As to quaternary structure, F-type ATPases have 2 components, CF(1) - the catalytic core - and CF(0) - the membrane proton channel. CF(1) has five subunits: alpha(3), beta(3), gamma(1), delta(1), epsilon(1). CF(0) has three main subunits: a(1), b(2) and c(9-12). The alpha and beta chains form an alternating ring which encloses part of the gamma chain. CF(1) is attached to CF(0) by a central stalk formed by the gamma and epsilon chains, while a peripheral stalk is formed by the delta and b chains.

It is found in the cell inner membrane. It carries out the reaction ATP + H2O + 4 H(+)(in) = ADP + phosphate + 5 H(+)(out). Produces ATP from ADP in the presence of a proton gradient across the membrane. The alpha chain is a regulatory subunit. The sequence is that of ATP synthase subunit alpha from Mannheimia succiniciproducens (strain KCTC 0769BP / MBEL55E).